A 383-amino-acid polypeptide reads, in one-letter code: UDP-N-acetylglucosamine 2-epimerase (383 aa).

The protein belongs to the UDP-N-acetylglucosamine 2-epimerase family.

It carries out the reaction UDP-N-acetyl-alpha-D-glucosamine = UDP-N-acetyl-alpha-D-mannosamine. It functions in the pathway capsule biogenesis; capsule polysaccharide biosynthesis. In terms of biological role, non-hydrolyzing C2-epimerase involved in the biosynthesis of capsular polysaccharides. Catalyzes the C2 epimerization of UDP-N-acetylglucosamine (UDP-GlcNAc) to form UDP-N-acetylmannosamine (UDP-ManNAc). In Campylobacter jejuni, this protein is UDP-N-acetylglucosamine 2-epimerase.